Here is a 261-residue protein sequence, read N- to C-terminus: Small ribosomal subunit protein eS1B (261 aa).

The segment covering 1 to 18 (MTLGKNKRISKGGKRGKK) has biased composition (basic residues). Positions 1–23 (MTLGKNKRISKGGKRGKKKAQET) are disordered.

It belongs to the eukaryotic ribosomal protein eS1 family. In terms of assembly, component of the small ribosomal subunit. Mature ribosomes consist of a small (40S) and a large (60S) subunit. The 40S subunit contains about 33 different proteins and 1 molecule of RNA (18S). The 60S subunit contains about 49 different proteins and 3 molecules of RNA (25S, 5.8S and 5S).

The protein resides in the cytoplasm. This chain is Small ribosomal subunit protein eS1B, found in Trypanosoma cruzi (strain CL Brener).